The primary structure comprises 564 residues: Apyrase (564 aa).

The N-terminal stretch at 1–25 (MAGKPGIQLFVIFLLLSSFAAVVWA) is a signal peptide. A divalent metal cation is bound by residues Asp48, His50, Asp99, Asn131, His234, and His258. Arg371 is an AMP binding site. An N-linked (GlcNAc...) asparagine glycan is attached at Asn391. AMP contacts are provided by Arg406, Phe425, and Asp515.

The protein belongs to the 5'-nucleotidase family. A divalent metal cation is required as a cofactor. Female salivary gland (at protein level). Low-level expression in male tissues. Not detected in female carcasses without salivary glands.

The protein localises to the secreted. The catalysed reaction is a ribonucleoside 5'-triphosphate + 2 H2O = a ribonucleoside 5'-phosphate + 2 phosphate + 2 H(+). Its function is as follows. Facilitates hematophagy by inhibiting ADP-dependent platelet aggregation in the host. Cleaves adenosine triphosphate (ATP) and adenosine diphosphate (ADP) to adenosine monophosphate (AMP) and inorganic phosphate. May reduce probing time by facilitating the speed of locating blood. This is Apyrase from Aedes albopictus (Asian tiger mosquito).